A 200-amino-acid polypeptide reads, in one-letter code: NADH-quinone oxidoreductase subunit C (200 aa).

It belongs to the complex I 30 kDa subunit family. In terms of assembly, NDH-1 is composed of 14 different subunits. Subunits NuoB, C, D, E, F, and G constitute the peripheral sector of the complex.

It localises to the cell inner membrane. The catalysed reaction is a quinone + NADH + 5 H(+)(in) = a quinol + NAD(+) + 4 H(+)(out). In terms of biological role, NDH-1 shuttles electrons from NADH, via FMN and iron-sulfur (Fe-S) centers, to quinones in the respiratory chain. The immediate electron acceptor for the enzyme in this species is believed to be ubiquinone. Couples the redox reaction to proton translocation (for every two electrons transferred, four hydrogen ions are translocated across the cytoplasmic membrane), and thus conserves the redox energy in a proton gradient. The polypeptide is NADH-quinone oxidoreductase subunit C (Paraburkholderia xenovorans (strain LB400)).